Consider the following 574-residue polypeptide: Sulfate adenylyltransferase (574 aa).

The interval 1–169 (MANPPHGGVL…IEAINKLNHY (169 aa)) is N-terminal. The tract at residues 170–394 (DYVALRYTPA…LRESSPPRHT (225 aa)) is catalytic. Glutamine 197 lines the sulfate pocket. Residues 197–200 (QTRN) and 291–294 (GRDH) contribute to the ATP site. Catalysis depends on residues threonine 198, arginine 199, and asparagine 200. Arginine 199 is a sulfate binding site. Position 295 (alanine 295) interacts with sulfate. Valine 333 is a binding site for ATP. Residues 395–574 (QGFTIFLTGY…LETEGFFDRS (180 aa)) form an allosteric regulation domain; adenylyl-sulfate kinase-like region. Residues 434–437 (DTVR), arginine 451, 477–478 (IA), and arginine 516 each bind 3'-phosphoadenylyl sulfate.

It in the N-terminal section; belongs to the sulfate adenylyltransferase family. The protein in the C-terminal section; belongs to the APS kinase family. In terms of assembly, homohexamer. Dimer of trimers.

The protein resides in the cytoplasm. It carries out the reaction sulfate + ATP + H(+) = adenosine 5'-phosphosulfate + diphosphate. The protein operates within sulfur metabolism; hydrogen sulfide biosynthesis; sulfite from sulfate: step 1/3. Its activity is regulated as follows. Allosterically inhibited by 3'-phosphoadenosine 5'-phosphosulfate (PAPS). Functionally, catalyzes the first intracellular reaction of sulfate assimilation, forming adenosine-5'-phosphosulfate (APS) from inorganic sulfate and ATP. Plays an important role in sulfate activation as a component of the biosynthesis pathway of sulfur-containing amino acids. The chain is Sulfate adenylyltransferase from Aspergillus fumigatus (strain ATCC MYA-4609 / CBS 101355 / FGSC A1100 / Af293) (Neosartorya fumigata).